The sequence spans 101 residues: Biogenesis of lysosome-related organelles complex 1 subunit SNN1 (101 aa).

A coiled-coil region spans residues 62–100 (DSNEYKAQFKEVNNLQKRLQKITLRLKDLERRSSQLTTS).

It belongs to the SNAPIN family. Component of the biogenesis of lysosome-related organelles complex-1 (BLOC-1).

It localises to the endosome. In terms of biological role, component of the biogenesis of lysosome-related organelles complex-1 (BLOC-1), a complex involved in endosomal cargo sorting. The protein is Biogenesis of lysosome-related organelles complex 1 subunit SNN1 (SNN1) of Candida glabrata (strain ATCC 2001 / BCRC 20586 / JCM 3761 / NBRC 0622 / NRRL Y-65 / CBS 138) (Yeast).